Consider the following 130-residue polypeptide: Small ribosomal subunit protein uS8 (130 aa).

The protein belongs to the universal ribosomal protein uS8 family. Part of the 30S ribosomal subunit. Contacts proteins S5 and S12.

In terms of biological role, one of the primary rRNA binding proteins, it binds directly to 16S rRNA central domain where it helps coordinate assembly of the platform of the 30S subunit. This is Small ribosomal subunit protein uS8 from Cereibacter sphaeroides (strain KD131 / KCTC 12085) (Rhodobacter sphaeroides).